We begin with the raw amino-acid sequence, 778 residues long: Probable cation-transporting ATPase exp7 (778 aa).

Topologically, residues 1-37 (MDKNKIMGLTQREVKERQAEGLVNDFTASASTSTWQI) are cytoplasmic. The chain crosses the membrane as a helical span at residues 38–57 (VKRNVFTLFNALNFAIALAL). The Extracellular segment spans residues 58–64 (AFVQAWS). The helical transmembrane segment at 65-84 (NLVFFAVICFNAFSGIVTEL) threads the bilayer. Topologically, residues 85-209 (RAKHMVDKLN…PINSRIMKSL (125 aa)) are cytoplasmic. The chain crosses the membrane as a helical span at residues 210–229 (DKLAGFTGKIIIPFGLALLL). Topologically, residues 230–242 (EALLLKGLPLKSS) are extracellular. Residues 243–260 (VVNSSTALLGMLPKGIAL) traverse the membrane as a helical segment. At 261–586 (LTITSLLTAV…FEGRRVVNNI (326 aa)) the chain is on the cytoplasmic side. Residue Asp298 is the 4-aspartylphosphate intermediate of the active site. Residues Asp532 and Asp536 each coordinate Mg(2+). The helical transmembrane segment at 587–606 (AHIAPIFLIKTIYSFLLAVI) threads the bilayer. Residues 607-624 (CIASALLGRSEWILIFPF) lie on the Extracellular side of the membrane. A helical transmembrane segment spans residues 625–645 (IPIQITMIDQFVEGFPPFVLT). The Cytoplasmic segment spans residues 646 to 663 (FERNIKPVEQNFLRKSML). Residues 664-684 (RALPSALMVVFSVLFVKMFGA) form a helical membrane-spanning segment. Topologically, residues 685–689 (SQGWS) are extracellular. The helical transmembrane segment at 690-708 (ELEISTLLYYLLGSIGFLS) threads the bilayer. Topologically, residues 709–716 (VFRACMPF) are cytoplasmic. A helical membrane pass occupies residues 717–739 (TLWRVLLIVWSVGGFLATALFPR). At 740 to 757 (IQKLLEISTLTEQTLPVY) the chain is on the extracellular side. A helical membrane pass occupies residues 758 to 777 (GVMMLVFTVIFILTSRYQAK). A topological domain (cytoplasmic) is located at residue Lys778.

It belongs to the cation transport ATPase (P-type) (TC 3.A.3) family.

Its subcellular location is the cell membrane. It carries out the reaction ATP + H2O = ADP + phosphate + H(+). This chain is Probable cation-transporting ATPase exp7 (exp7), found in Streptococcus pneumoniae serotype 4 (strain ATCC BAA-334 / TIGR4).